A 114-amino-acid chain; its full sequence is Iron-sulfur cluster insertion protein ErpA (114 aa).

Residues Cys42, Cys106, and Cys108 each coordinate iron-sulfur cluster.

Belongs to the HesB/IscA family. As to quaternary structure, homodimer. Requires iron-sulfur cluster as cofactor.

Its function is as follows. Required for insertion of 4Fe-4S clusters for at least IspG. The sequence is that of Iron-sulfur cluster insertion protein ErpA from Haemophilus influenzae (strain PittEE).